An 85-amino-acid chain; its full sequence is Small ribosomal subunit protein uS17 (85 aa).

Belongs to the universal ribosomal protein uS17 family. Part of the 30S ribosomal subunit.

One of the primary rRNA binding proteins, it binds specifically to the 5'-end of 16S ribosomal RNA. The polypeptide is Small ribosomal subunit protein uS17 (Acinetobacter baumannii (strain AB307-0294)).